The primary structure comprises 932 residues: Complement component C6 (932 aa).

The signal sequence occupies residues Met-1–Ala-21. 11 disulfide bridges follow: Cys-22–Cys-61, Cys-24–Cys-65, Cys-35–Cys-73, Cys-39–Cys-78, Cys-82–Cys-117, Cys-93–Cys-127, Cys-96–Cys-133, Cys-140–Cys-151, Cys-146–Cys-164, Cys-158–Cys-173, and Cys-180–Cys-218. TSP type-1 domains follow at residues Cys-22–Pro-79 and Asn-81–Lys-134. Trp-29 and Trp-32 each carry a C-linked (Man) tryptophan glycan. Thr-38 carries an O-linked (Fuc...) threonine glycan. Trp-90 is a glycosylation site (C-linked (Man) tryptophan). Residues Asp-139–Gly-174 enclose the LDL-receptor class A domain. Residues Leu-156, Asn-159, Glu-161, Asp-163, Asp-169, and Glu-170 each coordinate Ca(2+). One can recognise an MACPF domain in the interval Lys-176–Gln-522. A beta stranded membrane pass occupies residues Ser-278–Ser-290. N-linked (GlcNAc...) asparagine glycosylation is present at Asn-324. Residue Thr-392 is glycosylated (O-linked (Fuc...) threonine). 16 disulfide bridges follow: Cys-399–Cys-420, Cys-499–Cys-623, Cys-521–Cys-570, Cys-523–Cys-539, Cys-526–Cys-541, Cys-543–Cys-552, Cys-577–Cys-611, Cys-589–Cys-601, Cys-644–Cys-686, Cys-672–Cys-699, Cys-704–Cys-746, Cys-732–Cys-761, Cys-773–Cys-823, Cys-784–Cys-801, Cys-786–Cys-837, and Cys-793–Cys-816. Residues Ile-402–Lys-415 traverse the membrane as a beta stranded segment. The region spanning Cys-523 to Glu-553 is the EGF-like domain. The TSP type-1 3 domain maps to Asp-565 to Thr-612. Trp-568, Trp-571, and Trp-574 each carry a C-linked (Man) tryptophan glycan. CCP stretches follow at residues Cys-611–Pro-688 and Asp-689–Val-765. 2 Sushi domains span residues Ser-642–Arg-701 and Thr-702–Lys-763. The tract at residues Ser-642 to Cys-932 is C5b-binding domain. Factor I module (FIM) regions lie at residues Leu-766 to Gly-840 and Lys-858 to Cys-932. One can recognise a Kazal-like 1 domain in the interval Leu-780 to Glu-839. Residue Asn-859 is glycosylated (N-linked (GlcNAc...) asparagine). Cystine bridges form between Cys-862-Cys-873, Cys-867-Cys-919, Cys-880-Cys-897, Cys-882-Cys-932, and Cys-888-Cys-912. The Kazal-like 2 domain maps to Thr-876–Cys-932.

It belongs to the complement C6/C7/C8/C9 family. Component of the membrane attack complex (MAC), composed of complement C5b, C6, C7, C8A, C8B, C8G and multiple copies of the pore-forming subunit C9. Post-translationally, all cysteine residues are assumed to be cross-linked to one another. Individual modules containing an even number of conserved cysteine residues are supposed to have disulfide linkages only within the same module.

Its subcellular location is the secreted. The protein resides in the target cell membrane. Its activity is regulated as follows. Membrane attack complex (MAC) assembly is inhibited by CD59, thereby protecting self-cells from damage during complement activation. MAC assembly is also inhibited by clusterin (CLU) chaperones that inhibit polymerization of C9. Functionally, component of the membrane attack complex (MAC), a multiprotein complex activated by the complement cascade, which inserts into a target cell membrane and forms a pore, leading to target cell membrane rupture and cell lysis. The MAC is initiated by proteolytic cleavage of C5 into complement C5b in response to the classical, alternative, lectin and GZMK complement pathways. The complement pathways consist in a cascade of proteins that leads to phagocytosis and breakdown of pathogens and signaling that strengthens the adaptive immune system. Together with component C5b, involved in MAC complex assembly: complement C5b and C6 associate with the outer leaflet of target cell membrane, reducing the energy for membrane bending. In Bos taurus (Bovine), this protein is Complement component C6 (C6).